Consider the following 65-residue polypeptide: Large ribosomal subunit protein uL29 (65 aa).

It belongs to the universal ribosomal protein uL29 family.

The sequence is that of Large ribosomal subunit protein uL29 from Coxiella burnetii (strain CbuK_Q154) (Coxiella burnetii (strain Q154)).